Consider the following 418-residue polypeptide: tRNA wybutosine-synthesizing protein 2 (418 aa).

S-adenosyl-L-methionine-binding positions include S228, K235, 275-276, and 302-303; these read EI and EN.

This sequence belongs to the class I-like SAM-binding methyltransferase superfamily. TRM5/TYW2 family.

The protein localises to the cytoplasm. It is found in the nucleus. It carries out the reaction 4-demethylwyosine(37) in tRNA(Phe) + S-adenosyl-L-methionine = 4-demethyl-7-[(3S)-3-amino-3-carboxypropyl]wyosine(37) in tRNA(Phe) + S-methyl-5'-thioadenosine + H(+). Its pathway is tRNA modification; wybutosine-tRNA(Phe) biosynthesis. In terms of biological role, S-adenosyl-L-methionine-dependent transferase that acts as a component of the wybutosine biosynthesis pathway. Wybutosine is a hyper modified guanosine with a tricyclic base found at the 3'-position adjacent to the anticodon of eukaryotic phenylalanine tRNA. Catalyzes the transfer of the alpha-amino-alpha-carboxypropyl (acp) group from S-adenosyl-L-methionine to the C-7 position of 4-demethylwyosine (imG-14) to produce wybutosine-86. This chain is tRNA wybutosine-synthesizing protein 2 (trm12), found in Schizosaccharomyces pombe (strain 972 / ATCC 24843) (Fission yeast).